Here is a 666-residue protein sequence, read N- to C-terminus: Translation factor guf1, mitochondrial (666 aa).

Residues 1–43 constitute a mitochondrion transit peptide; it reads MRGCLQLARWLRAAPKCPAASLLKPPSGLANPARFFTTSTACW. Residues 68–248 form the tr-type G domain; that stretch reads DRYRNFCIVA…TVVEKIPAPV (181 aa). Residues 77-84, 141-145, and 195-198 contribute to the GTP site; these read AHVDHGKS, DTPGH, and NKVD.

Belongs to the TRAFAC class translation factor GTPase superfamily. Classic translation factor GTPase family. LepA subfamily.

Its subcellular location is the mitochondrion inner membrane. It catalyses the reaction GTP + H2O = GDP + phosphate + H(+). Promotes mitochondrial protein synthesis. May act as a fidelity factor of the translation reaction, by catalyzing a one-codon backward translocation of tRNAs on improperly translocated ribosomes. Binds to mitochondrial ribosomes in a GTP-dependent manner. This is Translation factor guf1, mitochondrial (guf1) from Aspergillus niger (strain ATCC MYA-4892 / CBS 513.88 / FGSC A1513).